The primary structure comprises 369 residues: Phenylalanine--tRNA ligase alpha subunit (369 aa).

Position 269 (Glu269) interacts with Mg(2+).

Belongs to the class-II aminoacyl-tRNA synthetase family. Phe-tRNA synthetase alpha subunit type 1 subfamily. As to quaternary structure, tetramer of two alpha and two beta subunits. Mg(2+) serves as cofactor.

The protein resides in the cytoplasm. It carries out the reaction tRNA(Phe) + L-phenylalanine + ATP = L-phenylalanyl-tRNA(Phe) + AMP + diphosphate + H(+). The protein is Phenylalanine--tRNA ligase alpha subunit of Brucella canis (strain ATCC 23365 / NCTC 10854 / RM-666).